The following is a 604-amino-acid chain: ATPase family AAA domain-containing protein 3A homolog (604 aa).

Residues 1–50 (MSWLLGRNRQQPQPDQTAGFSEGGGAADPEGRTAGEKSGDSQLSRAERKA) are disordered. Residues 8–19 (NRQQPQPDQTAG) are compositionally biased toward polar residues. Residues 29-50 (PEGRTAGEKSGDSQLSRAERKA) are compositionally biased toward basic and acidic residues. The stretch at 62–221 (ERAADAAKTL…INLEKIRLKA (160 aa)) forms a coiled coil. Position 358 to 365 (358 to 365 (GPPGTGKT)) interacts with ATP.

As to quaternary structure, can form homooligomers.

It localises to the mitochondrion inner membrane. It is found in the mitochondrion matrix. The protein localises to the mitochondrion nucleoid. Required to maintain the proper number of mitochondria in neurons and muscles. The polypeptide is ATPase family AAA domain-containing protein 3A homolog (Drosophila melanogaster (Fruit fly)).